The sequence spans 471 residues: Monocarboxylate transporter 11 (471 aa).

Residues methionine 1–phenylalanine 13 show a composition bias toward basic residues. The interval methionine 1–glycine 31 is disordered. Residues methionine 1–glycine 35 lie on the Cytoplasmic side of the membrane. Over residues proline 19 to glutamine 28 the composition is skewed to low complexity. The next 12 helical transmembrane spans lie at glycine 36–leucine 56, alanine 78–leucine 98, proline 106–serine 126, leucine 131–leucine 151, valine 163–alanine 183, leucine 198–valine 218, alanine 243–valine 263, glycine 273–alanine 293, leucine 312–valine 332, glycine 333–alanine 353, leucine 367–leucine 389, and alanine 407–proline 427. The Cytoplasmic segment spans residues arginine 428 to cysteine 471.

It belongs to the major facilitator superfamily. Monocarboxylate porter (TC 2.A.1.13) family. In terms of assembly, interacts with isoform 2 of BSG. Expressed in liver, salivary gland and thyroid.

It is found in the endoplasmic reticulum membrane. The protein localises to the cell membrane. The enzyme catalyses pyruvate(out) + H(+)(out) = pyruvate(in) + H(+)(in). Proton-linked monocarboxylate transporter. It catalyzes the transport of pyruvate across the plasma membrane. Probably involved in hepatic lipid metabolism: overexpression results in an increase of triacylglycerol(TAG) levels, small increases in intracellular diacylglycerols and decreases in lysophosphatidylcholine, cholesterol ester and sphingomyelin lipids. The chain is Monocarboxylate transporter 11 (SLC16A11) from Homo sapiens (Human).